The chain runs to 719 residues: KIIVEKDPVRTSFEKWAQPGHFSKTLAKGPNTTTWIWNLHADAHDFDSHTNDLEDISRKIFSAHFGQLSIIFIWLSGMYFHGARFSNYEAWLSDPTHIKPSAQVVWPIVGQEILNGDVGGGFQGIQITSGFFQLWRASGITNELQLYCTAIGALIFAGLMLFAGWFHYHKAAPKLAWFQDVESMLNHHLAGLLGLGSLGWAGHQVHVSLPINQLLDSGVDPREIPLPHEFILNRDLLAQLYPSFSEGLTPFFNLEWSKYSDFLTFRGGLNPVTGGLWLTDTAHHHIAIAVLFLIAGHMYRTNWGIGHSIKEILEAHKGPFTGEGHRGLFEILTSSWHAQLAVNLAMLGSLTIIVAHHMYAMPPYPYLATDYGTQLSLFTHHMWIGGFLVVGAAAHAAIFMVRDYDPSTQYNNLLDRVIRHRDAIISHLNWVCIFLGFHSFGLYIHNDTMSALGRPQDMFSDTAIQLQPIFAQWIQNTHALAPSLTAPNATASTSLTWGGGDLVSVGGRVALLPIPLGTADFLVHHIHAFTIHVTVLILLKGVLFARSSRLIPDKANLGFRFPCDGPGRGGTCQVSAWDHVFLGLFWMYNSISVVIFHFSWKMQSDVWGSINEQGVISHITGGNFAQSATTINGWLRDFLWAQASQVIQSYGSSLSAYGLLFLGAHFVWAFSLMFLFSGRGYWQELIESILWAHNKLKVAPAIQPRALSIVQGRAVGVAH.

Helical transmembrane passes span 60–83 (IFSA…FHGA), 146–169 (LYCT…FHYH), 185–209 (LNHH…HVSL), 281–299 (TAHH…GHMY), 336–359 (WHAQ…HHMY), 375–401 (LSLF…IFMV), 423–445 (AIIS…LYIH), and 521–539 (FLVH…LILL). Positions 563 and 572 each coordinate [4Fe-4S] cluster. The next 2 membrane-spanning stretches (helical) occupy residues 579–600 (HVFL…HFSW) and 654–676 (LSAY…MFLF). His-665 is a chlorophyll a' binding site. 2 residues coordinate chlorophyll a: Met-673 and Tyr-681. Residue Trp-682 participates in phylloquinone binding. Residues 714–719 (AVGVAH) form a helical membrane-spanning segment.

It belongs to the PsaA/PsaB family. The PsaA/B heterodimer binds the P700 chlorophyll special pair and subsequent electron acceptors. PSI consists of a core antenna complex that captures photons, and an electron transfer chain that converts photonic excitation into a charge separation. The eukaryotic PSI reaction center is composed of at least 11 subunits. Requires P700 is a chlorophyll a/chlorophyll a' dimer, A0 is one or more chlorophyll a, A1 is one or both phylloquinones and FX is a shared 4Fe-4S iron-sulfur center. as cofactor.

Its subcellular location is the plastid. It is found in the chloroplast thylakoid membrane. The enzyme catalyses reduced [plastocyanin] + hnu + oxidized [2Fe-2S]-[ferredoxin] = oxidized [plastocyanin] + reduced [2Fe-2S]-[ferredoxin]. Functionally, psaA and PsaB bind P700, the primary electron donor of photosystem I (PSI), as well as the electron acceptors A0, A1 and FX. PSI is a plastocyanin-ferredoxin oxidoreductase, converting photonic excitation into a charge separation, which transfers an electron from the donor P700 chlorophyll pair to the spectroscopically characterized acceptors A0, A1, FX, FA and FB in turn. Oxidized P700 is reduced on the lumenal side of the thylakoid membrane by plastocyanin. This chain is Photosystem I P700 chlorophyll a apoprotein A1, found in Equisetum palustre (Marsh horsetail).